The following is a 431-amino-acid chain: Enolase (431 aa).

Position 167 (Gln167) interacts with (2R)-2-phosphoglycerate. Glu209 (proton donor) is an active-site residue. 3 residues coordinate Mg(2+): Asp246, Glu289, and Asp316. The (2R)-2-phosphoglycerate site is built by Lys341, Arg370, Ser371, and Lys392. Lys341 functions as the Proton acceptor in the catalytic mechanism.

It belongs to the enolase family. In terms of assembly, component of the RNA degradosome, a multiprotein complex involved in RNA processing and mRNA degradation. Requires Mg(2+) as cofactor.

It is found in the cytoplasm. It localises to the secreted. The protein localises to the cell surface. The catalysed reaction is (2R)-2-phosphoglycerate = phosphoenolpyruvate + H2O. It functions in the pathway carbohydrate degradation; glycolysis; pyruvate from D-glyceraldehyde 3-phosphate: step 4/5. Functionally, catalyzes the reversible conversion of 2-phosphoglycerate (2-PG) into phosphoenolpyruvate (PEP). It is essential for the degradation of carbohydrates via glycolysis. This Hahella chejuensis (strain KCTC 2396) protein is Enolase.